The sequence spans 348 residues: Ferredoxin--NADP reductase 1 (348 aa).

FAD contacts are provided by Asp33, Lys41, Tyr45, Val85, Leu120, Asp287, and Ser328.

Belongs to the ferredoxin--NADP reductase type 2 family. In terms of assembly, homodimer. The cofactor is FAD.

It carries out the reaction 2 reduced [2Fe-2S]-[ferredoxin] + NADP(+) + H(+) = 2 oxidized [2Fe-2S]-[ferredoxin] + NADPH. The polypeptide is Ferredoxin--NADP reductase 1 (Oceanobacillus iheyensis (strain DSM 14371 / CIP 107618 / JCM 11309 / KCTC 3954 / HTE831)).